Here is a 568-residue protein sequence, read N- to C-terminus: Tetratricopeptide repeat protein 22 (568 aa).

TPR repeat units lie at residues proline 66–asparagine 99, asparagine 101–glutamate 133, tyrosine 155–isoleucine 190, alanine 203–valine 237, lysine 260–glutamine 294, proline 296–proline 328, and proline 432–glycine 465.

The polypeptide is Tetratricopeptide repeat protein 22 (Ttc22) (Mus musculus (Mouse)).